The sequence spans 282 residues: Sirohydrochlorin cobaltochelatase CbiKC (282 aa).

The active-site Proton acceptor is the His166. 2 residues coordinate Co(2+): His166 and His228.

The protein belongs to the CbiK family.

Its subcellular location is the cytoplasm. It catalyses the reaction Co-sirohydrochlorin + 2 H(+) = sirohydrochlorin + Co(2+). The catalysed reaction is siroheme + 2 H(+) = sirohydrochlorin + Fe(2+). It participates in cofactor biosynthesis; adenosylcobalamin biosynthesis; cob(II)yrinate a,c-diamide from sirohydrochlorin (anaerobic route): step 1/10. It functions in the pathway porphyrin-containing compound metabolism; siroheme biosynthesis; siroheme from sirohydrochlorin: step 1/1. Functionally, catalyzes the insertion of Co(2+) into sirohydrochlorin as part of the anaerobic pathway to cobalamin biosynthesis. To a lesser extent, is also able to insert Fe(2+) into sirohydrochlorin, yielding siroheme. In Nitratidesulfovibrio vulgaris (strain ATCC 29579 / DSM 644 / CCUG 34227 / NCIMB 8303 / VKM B-1760 / Hildenborough) (Desulfovibrio vulgaris), this protein is Sirohydrochlorin cobaltochelatase CbiKC (cbiKc).